A 273-amino-acid polypeptide reads, in one-letter code: Hemin import ATP-binding protein HmuV (273 aa).

An ABC transporter domain is found at 2–256 (LTAHHLDVAR…AHIAQCYGFA (255 aa)). 34-41 (GRNGAGKS) is an ATP binding site.

It belongs to the ABC transporter superfamily. Heme (hemin) importer (TC 3.A.1.14.5) family. In terms of assembly, the complex is composed of two ATP-binding proteins (HmuV), two transmembrane proteins (HmuU) and a solute-binding protein (HmuT).

The protein resides in the cell inner membrane. Its function is as follows. Part of the ABC transporter complex HmuTUV involved in hemin import. Responsible for energy coupling to the transport system. In Burkholderia lata (strain ATCC 17760 / DSM 23089 / LMG 22485 / NCIMB 9086 / R18194 / 383), this protein is Hemin import ATP-binding protein HmuV.